A 451-amino-acid polypeptide reads, in one-letter code: mRNA cleavage and polyadenylation factor CLP1 (451 aa).

ATP contacts are provided by residues Glu-33, Lys-72, and 133–138 (NTGKTA).

It belongs to the Clp1 family. Clp1 subfamily. Component of a pre-mRNA cleavage factor complex. Interacts directly with PCF11.

The protein resides in the nucleus. Functionally, required for endonucleolytic cleavage during polyadenylation-dependent pre-mRNA 3'-end formation. This chain is mRNA cleavage and polyadenylation factor CLP1, found in Vanderwaltozyma polyspora (strain ATCC 22028 / DSM 70294 / BCRC 21397 / CBS 2163 / NBRC 10782 / NRRL Y-8283 / UCD 57-17) (Kluyveromyces polysporus).